The sequence spans 166 residues: Large ribosomal subunit protein uL10 (166 aa).

Belongs to the universal ribosomal protein uL10 family. In terms of assembly, part of the ribosomal stalk of the 50S ribosomal subunit. The N-terminus interacts with L11 and the large rRNA to form the base of the stalk. The C-terminus forms an elongated spine to which L12 dimers bind in a sequential fashion forming a multimeric L10(L12)X complex.

Forms part of the ribosomal stalk, playing a central role in the interaction of the ribosome with GTP-bound translation factors. This is Large ribosomal subunit protein uL10 from Stutzerimonas stutzeri (strain A1501) (Pseudomonas stutzeri).